We begin with the raw amino-acid sequence, 125 residues long: uncharacterized protein (125 aa).

The HTH cro/C1-type domain occupies 19–73; the sequence is IYSLRLAKGLSRQQLAEVIDVTHQQLQKYEKAINRISVGRLVLIAEALDRNIDYF. A DNA-binding region (H-T-H motif) is located at residues 30 to 49; it reads RQQLAEVIDVTHQQLQKYEK.

This is an uncharacterized protein from Rickettsia conorii (strain ATCC VR-613 / Malish 7).